The primary structure comprises 479 residues: RAC-gamma serine/threonine-protein kinase (479 aa).

Residue Ser-2 is modified to N-acetylserine. One can recognise a PH domain in the interval Thr-5–Asp-107. The cysteines at positions 59 and 76 are disulfide-linked. Residues Phe-148 to Phe-405 enclose the Protein kinase domain. Residues Leu-154–Val-162 and Lys-177 each bind ATP. The active-site Proton acceptor is the Asp-271. Cys-293 and Cys-307 are joined by a disulfide. The O-linked (GlcNAc) threonine glycan is linked to Thr-302. At Thr-305 the chain carries Phosphothreonine; by PDPK1. Thr-309 carries O-linked (GlcNAc) threonine glycosylation. One can recognise an AGC-kinase C-terminal domain in the interval Ser-406 to Glu-479. Residues Ile-446 to Glu-479 are disordered. Thr-447 carries the post-translational modification Phosphothreonine. Acidic residues predominate over residues Lys-451 to Met-460. Ser-472 carries the post-translational modification Phosphoserine; by PKC/PRKCZ. O-linked (GlcNAc) serine; alternate glycosylation occurs at Ser-472.

It belongs to the protein kinase superfamily. AGC Ser/Thr protein kinase family. RAC subfamily. As to quaternary structure, interacts (via PH domain) with TCL1A; this enhances AKT3 phosphorylation and activation. Interacts with TRAF6. Interacts with KCTD20. Interacts with BTBD10. Phosphorylation on Thr-305 and Ser-472 is required for full activity. Phosphorylation of the activation loop at Thr-305 by PDPK1/PDK1 is a prerequisite for full activation. Phosphorylation at Ser-472 by mTORC2 in response to growth factors plays a key role in AKT1 activation by facilitating subsequent phosphorylation of the activation loop by PDPK1/PDK1. Post-translationally, ubiquitinated. When fully phosphorylated and translocated into the nucleus, undergoes 'Lys-48'-polyubiquitination catalyzed by TTC3, leading to its degradation by the proteasome. In terms of processing, O-GlcNAcylation at Thr-302 and Thr-309 inhibits activating phosphorylation at Thr-305 via disrupting the interaction between AKT and PDPK1/PDK1.

The protein resides in the nucleus. Its subcellular location is the cytoplasm. It is found in the membrane. The enzyme catalyses L-seryl-[protein] + ATP = O-phospho-L-seryl-[protein] + ADP + H(+). It carries out the reaction L-threonyl-[protein] + ATP = O-phospho-L-threonyl-[protein] + ADP + H(+). Two specific sites, one in the kinase domain (Thr-305) and the other in the C-terminal regulatory region (Ser-472), need to be phosphorylated for its full activation. IGF-1 leads to the activation of AKT3, which may play a role in regulating cell survival. Functionally, AKT3 is one of 3 closely related serine/threonine-protein kinases (AKT1, AKT2 and AKT3) called the AKT kinase, and which regulate many processes including metabolism, proliferation, cell survival, growth and angiogenesis. This is mediated through serine and/or threonine phosphorylation of a range of downstream substrates. Over 100 substrate candidates have been reported so far, but for most of them, no isoform specificity has been reported. AKT3 is the least studied AKT isoform. It plays an important role in brain development and is crucial for the viability of malignant glioma cells. AKT3 isoform may also be the key molecule in up-regulation and down-regulation of MMP13 via IL13. Required for the coordination of mitochondrial biogenesis with growth factor-induced increases in cellular energy demands. Down-regulation by RNA interference reduces the expression of the phosphorylated form of BAD, resulting in the induction of caspase-dependent apoptosis. The polypeptide is RAC-gamma serine/threonine-protein kinase (Akt3) (Rattus norvegicus (Rat)).